Reading from the N-terminus, the 193-residue chain is MTIFAVFLLAIALSMDAFAVAVVSGCALQKPKVCHYVRLSAAFGFFQFAMPVIGWWLGVSVREYMEAWDHWIAFVLLGWIGGKMALSGLRALRNRESCACPSVDPTAGRNLVVLGVATSIDALAVGLSLAILGTPIWADAAIIGIVCAVITACGVYLGKTLANLCALNGWAELAGGLTLLAIACNILREHQVF.

6 helical membrane passes run 3 to 23 (IFAVFLLAIALSMDAFAVAVV), 41 to 61 (AAFGFFQFAMPVIGWWLGVSV), 69 to 89 (DHWIAFVLLGWIGGKMALSGL), 107 to 127 (AGRNLVVLGVATSIDALAVGL), 130 to 150 (AILGTPIWADAAIIGIVCAVI), and 164 to 184 (LCALNGWAELAGGLTLLAIAC).

Belongs to the MntP (TC 9.B.29) family.

Its subcellular location is the cell inner membrane. Its function is as follows. Probably functions as a manganese efflux pump. In Desulfovibrio desulfuricans (strain ATCC 27774 / DSM 6949 / MB), this protein is Putative manganese efflux pump MntP.